The chain runs to 170 residues: ATP synthase subunit b (170 aa).

The helical transmembrane segment at 15 to 37 threads the bilayer; it reads LNLFETNVLNWAVVVFGLYKFLP.

Belongs to the ATPase B chain family. As to quaternary structure, F-type ATPases have 2 components, F(1) - the catalytic core - and F(0) - the membrane proton channel. F(1) has five subunits: alpha(3), beta(3), gamma(1), delta(1), epsilon(1). F(0) has four main subunits: a(1), b(1), b'(1) and c(10-14). The alpha and beta chains form an alternating ring which encloses part of the gamma chain. F(1) is attached to F(0) by a central stalk formed by the gamma and epsilon chains, while a peripheral stalk is formed by the delta, b and b' chains.

The protein resides in the cellular thylakoid membrane. Its function is as follows. F(1)F(0) ATP synthase produces ATP from ADP in the presence of a proton or sodium gradient. F-type ATPases consist of two structural domains, F(1) containing the extramembraneous catalytic core and F(0) containing the membrane proton channel, linked together by a central stalk and a peripheral stalk. During catalysis, ATP synthesis in the catalytic domain of F(1) is coupled via a rotary mechanism of the central stalk subunits to proton translocation. Functionally, component of the F(0) channel, it forms part of the peripheral stalk, linking F(1) to F(0). This chain is ATP synthase subunit b, found in Prochlorococcus marinus (strain MIT 9515).